The sequence spans 907 residues: Leucine-rich repeat-containing G-protein coupled receptor 5 (907 aa).

Residues 1–21 form the signal peptide; the sequence is MDTSCVHMLLSLLALLQLVAA. At 22–561 the chain is on the extracellular side; the sequence is GSSPGPDAIP…EHLFGSWLIR (540 aa). Residues 25 to 66 form the LRRNT domain; the sequence is PGPDAIPRGCPSHCHCELDGRMLLRVDCSDLGLSELPSNLSV. 2 disulfide bridges follow: C34/C40 and C38/C52. N63 and N77 each carry an N-linked (GlcNAc...) asparagine glycan. LRR repeat units lie at residues 67–88, 91–112, 115–136, 139–160, 163–184, 187–208, 211–232, 235–256, 258–279, 282–303, 306–325, 329–350, 353–374, 375–396, 399–420, and 423–446; these read FTSY…LLHR, FLEE…AFTG, SLKV…ALQN, SLQS…CFSG, SLRH…AFRS, ALQA…AFGN, SLVV…CFDG, SLET…IKTL, NLKE…AFVG, SLIT…AFQH, ELRT…PHLT, TLES…VCDQ, NLQV…SGCQ, KLQK…TFQQ, NLRS…AFST, and SLIK…HGLT. N208 carries an N-linked (GlcNAc...) asparagine glycan. A disulfide bridge links C348 with C373. A disulfide bridge links C479 with C541. A helical membrane pass occupies residues 562 to 582; the sequence is IGVWTTAVLALSCNALVALTV. Over 583–593 the chain is Cytoplasmic; that stretch reads FRTPLYISSIK. Residues 594-614 form a helical membrane-spanning segment; sequence LLIGVIAVVDILMGVSSAVLA. The Extracellular segment spans residues 615–638; it reads AVDAFTFGRFAQHGAWWEDGIGCQ. A disulfide bridge connects residues C637 and C712. A helical membrane pass occupies residues 639–659; it reads IVGFLSIFASESSIFLLTLAA. Residues 660–682 are Cytoplasmic-facing; that stretch reads LERGFSVKCSSKFEVKAPLFSLR. A helical membrane pass occupies residues 683 to 703; it reads AIVLLCVLLALTIATIPLLGG. The Extracellular segment spans residues 704-723; that stretch reads SKYNASPLCLPLPFGEPSTT. A helical membrane pass occupies residues 724 to 744; it reads GYMVALVLLNSLCFLIMTIAY. Topologically, residues 745-767 are cytoplasmic; that stretch reads TKLYCSLEKGELENLWDCSMVKH. A helical membrane pass occupies residues 768-788; the sequence is IALLLFANCILYCPVAFLSFS. The Extracellular portion of the chain corresponds to 789–802; it reads SLLNLTFISPDVIK. N792 carries an N-linked (GlcNAc...) asparagine glycan. A helical membrane pass occupies residues 803-823; sequence FILLVIVPLPSCLNPLLYIVF. The Cytoplasmic portion of the chain corresponds to 824–907; the sequence is NPHFKEDMGS…LSSVAFVPCL (84 aa).

It belongs to the G-protein coupled receptor 1 family. In terms of assembly, identified in a complex composed of RNF43, LGR5 and RSPO1. Also interacts with other R-spondin ligands, including RSPO2, RSPO3 and RSPO4. As to expression, expressed in the intestinal epithelium (at protein level). Expressed in the gonads, the adrenal gland, and in the brain. In the central nervous system expression is restricted to the olfactory bulb. In the adrenal gland detected only in the neural-crest derived chromaffin cells of the medulla, but not in the cells of the adrenal cortex. In the gonads, the expression is high in Graafian follicle, but absent from primary and secondary follicles. In the intestine, exclusively expressed in cycling crypt base columnar cells. Expressed in the lower bulge and secondary germ area of telogen hair follicles and in the lower outer root sheath of anagen hair follicle.

It localises to the cell membrane. It is found in the golgi apparatus. Its subcellular location is the trans-Golgi network membrane. In terms of biological role, receptor for R-spondins that potentiates the canonical Wnt signaling pathway and acts as a stem cell marker of the intestinal epithelium and the hair follicle. Upon binding to R-spondins (RSPO1, RSPO2, RSPO3 or RSPO4), associates with phosphorylated LRP6 and frizzled receptors that are activated by extracellular Wnt receptors, triggering the canonical Wnt signaling pathway to increase expression of target genes. In contrast to classical G-protein coupled receptors, does not activate heterotrimeric G-proteins to transduce the signal. Involved in the development and/or maintenance of the adult intestinal stem cells during postembryonic development. The sequence is that of Leucine-rich repeat-containing G-protein coupled receptor 5 (Lgr5) from Mus musculus (Mouse).